We begin with the raw amino-acid sequence, 174 residues long: Cathepsin B-like cysteine proteinase 3 (174 aa).

Intrachain disulfides connect cysteine 22/cysteine 55 and cysteine 30/cysteine 42. Active-site residues include histidine 122 and asparagine 142.

The protein belongs to the peptidase C1 family.

Its function is as follows. Expression of the protease correlates with blood-feeding and suggests a role for the protease in blood digestion. This chain is Cathepsin B-like cysteine proteinase 3 (CP-3), found in Ostertagia ostertagi (Brown stomach worm).